We begin with the raw amino-acid sequence, 351 residues long: Putative aryl-alcohol dehydrogenase C977.14c (351 aa).

Serine 113 carries the phosphoserine modification.

Belongs to the aldo/keto reductase family. Aldo/keto reductase 2 subfamily.

It is found in the cytoplasm. The protein localises to the nucleus. This chain is Putative aryl-alcohol dehydrogenase C977.14c, found in Schizosaccharomyces pombe (strain 972 / ATCC 24843) (Fission yeast).